The chain runs to 391 residues: Phosphatidate cytidylyltransferase 4, chloroplastic (391 aa).

Residues 1–61 constitute a chloroplast transit peptide; it reads MATFAELVLS…SVSRRFLTAV (61 aa). A run of 6 helical transmembrane segments spans residues 102 to 122, 175 to 195, 202 to 222, 254 to 274, 298 to 318, and 321 to 341; these read IFGI…GWVF, FGNI…ALLV, FAQL…PSFW, VGLV…TFAF, IVGL…LSWP, and LFSS…GDLT.

The protein belongs to the CDS family. Mg(2+) is required as a cofactor.

It localises to the plastid. It is found in the chloroplast membrane. The enzyme catalyses a 1,2-diacyl-sn-glycero-3-phosphate + CTP + H(+) = a CDP-1,2-diacyl-sn-glycerol + diphosphate. It functions in the pathway phospholipid metabolism; CDP-diacylglycerol biosynthesis; CDP-diacylglycerol from sn-glycerol 3-phosphate: step 3/3. With respect to regulation, highest activities is obtained at about 30 mM CTP and 2 mM phosphatidic acid (PA). In terms of biological role, may be involved in the synthesis of minor phospholipids and in modulation of IP3-mediated signal transduction. Promotes the biosynthesis of plastidial phosphatidylglycerol (PG) which is required for structure and function of thylakoid membranes and, hence, for photoautotrophic growth. This chain is Phosphatidate cytidylyltransferase 4, chloroplastic, found in Arabidopsis thaliana (Mouse-ear cress).